Consider the following 490-residue polypeptide: Glutamate--tRNA ligase (490 aa).

A 'HIGH' region motif is present at residues 9-19 (PSPTGLQHIGG). The 'KMSKS' region signature appears at 251–255 (KLSKR). Lys-254 is a binding site for ATP.

The protein belongs to the class-I aminoacyl-tRNA synthetase family. Glutamate--tRNA ligase type 1 subfamily. Monomer.

The protein localises to the cytoplasm. The catalysed reaction is tRNA(Glu) + L-glutamate + ATP = L-glutamyl-tRNA(Glu) + AMP + diphosphate. Catalyzes the attachment of glutamate to tRNA(Glu) in a two-step reaction: glutamate is first activated by ATP to form Glu-AMP and then transferred to the acceptor end of tRNA(Glu). In Borreliella afzelii (strain PKo) (Borrelia afzelii), this protein is Glutamate--tRNA ligase.